Consider the following 271-residue polypeptide: MEAAAEPGNLAGVRHIVLVLSGKGGVGKSTISTELALALRHAGKKVGILDVDLCGPSIPRMLRAQGRAVHQGDSGWVPVFVDREQSISLMSVGFLLEQPDEAVVWRGPKKNALIKQFVSDVAWGQLDYLLVDTPPGTSDEHMAVVDALRPHSPLGALVVTTPQAVSVGDVRRELTFCRKVGLRVIGLVENMSGFVCPHCSECTNVFSKGGGEELARHAGVPFLGSVPLDPELTRSLEDGRDFIQDFPDSPAFPALSSIAQKILSETPAGLS.

N-acetylmethionine is present on M1. 22 to 29 contributes to the ATP binding site; it reads GKGGVGKS. The [4Fe-4S] cluster site is built by C196 and C199.

It belongs to the Mrp/NBP35 ATP-binding proteins family. NUBP2/CFD1 subfamily. Heterotetramer of 2 NUBP1 and 2 NUBP2 chains. Interacts with KIFC1. Interacts with NUBP1. It depends on [4Fe-4S] cluster as a cofactor.

The protein resides in the nucleus. The protein localises to the cytoplasm. Its subcellular location is the cytoskeleton. It localises to the microtubule organizing center. It is found in the centrosome. The protein resides in the cilium axoneme. The protein localises to the centriole. In terms of biological role, component of the cytosolic iron-sulfur (Fe/S) protein assembly (CIA) machinery. Required for maturation of extramitochondrial Fe-S proteins. The NUBP1-NUBP2 heterotetramer forms a Fe-S scaffold complex, mediating the de novo assembly of an Fe-S cluster and its transfer to target apoproteins. Negatively regulates cilium formation and structure. The chain is Cytosolic Fe-S cluster assembly factor NUBP2 from Bos taurus (Bovine).